A 600-amino-acid polypeptide reads, in one-letter code: ATP-dependent lipid A-core flippase (600 aa).

The next 5 membrane-spanning stretches (helical) occupy residues 28 to 48 (IMAV…IAFI), 80 to 100 (IMLM…VANF), 182 to 202 (WKLS…ISVV), 267 to 287 (ISQP…LYAA), and 295 to 315 (DLTA…LQPI). In terms of domain architecture, ABC transmembrane type-1 spans 28–327 (IMAVLGLITY…LTRVNAEFQR (300 aa)). The 238-residue stretch at 359 to 596 (LAFDNVTFAY…AGIYANLYQM (238 aa)) folds into the ABC transporter domain. 393-400 (GRSGSGKS) lines the ATP pocket.

The protein belongs to the ABC transporter superfamily. Lipid exporter (TC 3.A.1.106) family. In terms of assembly, homodimer.

Its subcellular location is the cell inner membrane. It carries out the reaction ATP + H2O + lipid A-core oligosaccharideSide 1 = ADP + phosphate + lipid A-core oligosaccharideSide 2.. Its function is as follows. Involved in lipopolysaccharide (LPS) biosynthesis. Translocates lipid A-core from the inner to the outer leaflet of the inner membrane. Transmembrane domains (TMD) form a pore in the inner membrane and the ATP-binding domain (NBD) is responsible for energy generation. The protein is ATP-dependent lipid A-core flippase of Shewanella frigidimarina (strain NCIMB 400).